Reading from the N-terminus, the 176-residue chain is ATP-dependent protease subunit HslV (176 aa).

The active site involves threonine 6. Na(+)-binding residues include serine 161, cysteine 164, and threonine 167.

The protein belongs to the peptidase T1B family. HslV subfamily. As to quaternary structure, a double ring-shaped homohexamer of HslV is capped on each side by a ring-shaped HslU homohexamer. The assembly of the HslU/HslV complex is dependent on binding of ATP.

Its subcellular location is the cytoplasm. It catalyses the reaction ATP-dependent cleavage of peptide bonds with broad specificity.. Allosterically activated by HslU binding. Its function is as follows. Protease subunit of a proteasome-like degradation complex believed to be a general protein degrading machinery. The chain is ATP-dependent protease subunit HslV from Pseudothermotoga lettingae (strain ATCC BAA-301 / DSM 14385 / NBRC 107922 / TMO) (Thermotoga lettingae).